Reading from the N-terminus, the 392-residue chain is MTTIGTPLRTNATKVMMLGSGELGKEVVIELQPLGVEVIAVDRYDNAPAQQVAHRAYTISMLDGNALRDLVEKEKPDFIVPEVEAIATATLVELEQEGYNVIPTAKATQLTMNREGIRRLAAEELGLKTSPYRFVDNFEQFQQAIQEIGIPCVVKPIMSSSGHGQSVIKSEADIQQAWDYSQQGGRAGGGRVIVEGFIKFDYEITQLTVRHIHGIVFSSHRHIQVDGDYRESWQPQQMSDIALKKAQETAEKITSALGGRGIFGVELFVCGDEIIFNEVSPRPHDTGIVTMASQELSQFALHARAILGLPIPEIYRISPAASKAIVVEGKSDNVRFGGVDKVLAEIGTNIRLFGKGEVNGHRRLGVILARDENTVRALETSRRAYDKLDIQL.

N(1)-(5-phospho-beta-D-ribosyl)glycinamide contacts are provided by residues 22 to 23 (EL) and Glu82. ATP contacts are provided by residues Arg114, Lys155, 160–165 (SSGHGQ), 195–198 (EGFI), and Glu203. The 189-residue stretch at 119 to 307 (RLAAEELGLK…QFALHARAIL (189 aa)) folds into the ATP-grasp domain. Mg(2+)-binding residues include Glu266 and Glu278. N(1)-(5-phospho-beta-D-ribosyl)glycinamide is bound by residues Asp285, Lys355, and 362–363 (RR).

Belongs to the PurK/PurT family. Homodimer.

Its subcellular location is the cell inner membrane. The enzyme catalyses N(1)-(5-phospho-beta-D-ribosyl)glycinamide + formate + ATP = N(2)-formyl-N(1)-(5-phospho-beta-D-ribosyl)glycinamide + ADP + phosphate + H(+). It participates in purine metabolism; IMP biosynthesis via de novo pathway; N(2)-formyl-N(1)-(5-phospho-D-ribosyl)glycinamide from N(1)-(5-phospho-D-ribosyl)glycinamide (formate route): step 1/1. Involved in the de novo purine biosynthesis. Catalyzes the transfer of formate to 5-phospho-ribosyl-glycinamide (GAR), producing 5-phospho-ribosyl-N-formylglycinamide (FGAR). Formate is provided by PurU via hydrolysis of 10-formyl-tetrahydrofolate. This chain is Formate-dependent phosphoribosylglycinamide formyltransferase, found in Mannheimia haemolytica (Pasteurella haemolytica).